The chain runs to 352 residues: C-X-C chemokine receptor type 4 (352 aa).

An important for chemokine binding and signaling region spans residues 1 to 21; that stretch reads MEGISIYTSDNYTEEMGSGDY. Topologically, residues 1–38 are extracellular; it reads MEGISIYTSDNYTEEMGSGDYDSMKEPCFREENANFNK. The residue at position 7 (Tyr7) is a Sulfotyrosine. Asn11 is a glycosylation site (N-linked (GlcNAc...) asparagine). Tyr12 carries the sulfotyrosine modification. Ser18 carries O-linked (Xyl...) (chondroitin sulfate) serine glycosylation. Tyr21 is modified (sulfotyrosine). Cystine bridges form between Cys28–Cys274 and Cys109–Cys186. A helical membrane pass occupies residues 39-63; that stretch reads IFLPTIYSIIFLTGIVGNGLVILVM. Residues 64-77 are Cytoplasmic-facing; it reads GYQKKLRSMTDKYR. The helical transmembrane segment at 78 to 99 threads the bilayer; it reads LHLSVADLLFVITLPFWAVDAV. The chemokine binding stretch occupies residues 94-97; the sequence is WAVD. The Extracellular segment spans residues 100 to 110; that stretch reads ANWYFGNFLCK. A helical membrane pass occupies residues 111 to 130; the sequence is AVHVIYTVNLYSSVLILAFI. The chemokine binding stretch occupies residues 113–117; it reads HVIYT. Residues 131–154 are Cytoplasmic-facing; that stretch reads SLDRYLAIVHATNSQRPRKLLAEK. The Important for signaling signature appears at 133 to 135; it reads DRY. The involved in dimerization; when bound to chemokine stretch occupies residues 135–147; it reads YLAIVHATNSQRP. Residues 155 to 174 traverse the membrane as a helical segment; sequence VVYVGVWIPALLLTIPDFIF. Residues 175–195 are Extracellular-facing; it reads ANVSEADDRYICDRFYPNDLW. Residues 186–190 are chemokine binding, important for signaling; sequence CDRFY. An involved in dimerization region spans residues 191-210; it reads PNDLWVVVFQFQHIMVGLIL. A helical membrane pass occupies residues 196 to 216; that stretch reads VVVFQFQHIMVGLILPGIVIL. Residues 217–241 lie on the Cytoplasmic side of the membrane; the sequence is SCYCIIISKLSHSKGHQKRKALKTT. The chain crosses the membrane as a helical span at residues 242-261; it reads VILILAFFACWLPYYIGISI. Residues 262–282 are Extracellular-facing; sequence DSFILLEIIKQGCEFENTVHK. The involved in dimerization stretch occupies residues 266-268; it reads LLE. Residues 283 to 302 form a helical membrane-spanning segment; it reads WISITEALAFFHCCLNPILY. The Cytoplasmic portion of the chain corresponds to 303–352; it reads AFLGAKFKTSAQHALTSVSRGSSLKILSKGKRGGHSSVSTESESSSFHSS. 2 positions are modified to phosphoserine: Ser319 and Ser321. A phosphoserine; by PKC and GRK6 mark is found at Ser324 and Ser325. The disordered stretch occupies residues 329 to 352; sequence LSKGKRGGHSSVSTESESSSFHSS. Ser330 is modified (phosphoserine; by GRK6). Residue Lys331 forms a Glycyl lysine isopeptide (Lys-Gly) (interchain with G-Cter in ubiquitin) linkage. A compositionally biased stretch (low complexity) spans 337–352; that stretch reads HSSVSTESESSSFHSS. Ser339 carries the phosphoserine; by GRK6 modification. A phosphoserine mark is found at Ser348 and Ser351.

Belongs to the G-protein coupled receptor 1 family. As to quaternary structure, monomer. Can form homodimers. Interacts with CD164. Interacts with ARRB2; the interaction is dependent on the C-terminal phosphorylation of CXCR4 and allows activation of MAPK1 and MAPK3. Interacts with ARR3; the interaction is dependent on the C-terminal phosphorylation of CXCR4 and modulates calcium mobilization. Interacts with RNF113A; the interaction, enhanced by CXCL12, promotes CXCR4 ubiquitination and subsequent degradation. Interacts (via the cytoplasmic C-terminal) with ITCH (via the WW domains I and II); the interaction, enhanced by CXCL12, promotes CXCR4 ubiquitination and leads to its degradation. Interacts with extracellular ubiquitin. Interacts with DBN1; this interaction is enhanced by antigenic stimulation. Following LPS binding, may form a complex with GDF5, HSP90AA1 and HSPA8. Post-translationally, phosphorylated on agonist stimulation. Rapidly phosphorylated on serine and threonine residues in the C-terminal. Phosphorylation at Ser-324 and Ser-325 leads to recruitment of ITCH, ubiquitination and protein degradation. Ubiquitinated after ligand binding, leading to its degradation. Ubiquitinated by ITCH at the cell membrane on agonist stimulation. The ubiquitin-dependent mechanism, endosomal sorting complex required for transport (ESCRT), then targets CXCR4 for lysosomal degradation. This process is dependent also on prior Ser-/Thr-phosphorylation in the C-terminal of CXCR4. Also binding of ARRB1 to STAM negatively regulates CXCR4 sorting to lysosomes though modulating ubiquitination of SFR5S. In terms of processing, sulfation is required for efficient binding of CXCL12/SDF-1alpha and promotes its dimerization. Post-translationally, O- and N-glycosylated. N-glycosylation can mask coreceptor function. The O-glycosylation chondroitin sulfate attachment does not affect interaction with CXCL12/SDF-1alpha nor its coreceptor activity.

Its subcellular location is the cell membrane. The protein resides in the cell junction. It localises to the early endosome. It is found in the late endosome. The protein localises to the lysosome. In terms of biological role, receptor for the C-X-C chemokine CXCL12/SDF-1 that transduces a signal by increasing intracellular calcium ion levels and enhancing MAPK1/MAPK3 activation. Involved in the AKT signaling cascade. Plays a role in regulation of cell migration, e.g. during wound healing. Acts as a receptor for extracellular ubiquitin; leading to enhanced intracellular calcium ions and reduced cellular cAMP levels. Binds bacterial lipopolysaccharide (LPS) et mediates LPS-induced inflammatory response, including TNF secretion by monocytes. Involved in hematopoiesis and in cardiac ventricular septum formation. Also plays an essential role in vascularization of the gastrointestinal tract, probably by regulating vascular branching and/or remodeling processes in endothelial cells. Involved in cerebellar development. In the CNS, could mediate hippocampal-neuron survival. The protein is C-X-C chemokine receptor type 4 (CXCR4) of Pan troglodytes (Chimpanzee).